A 213-amino-acid polypeptide reads, in one-letter code: Orotate phosphoribosyltransferase (213 aa).

Lys-26 contacts 5-phospho-alpha-D-ribose 1-diphosphate. 34–35 (FF) is an orotate binding site. Residues 72-73 (YK), Arg-99, Lys-100, Lys-103, His-105, and 124-132 (DDVITAGTA) contribute to the 5-phospho-alpha-D-ribose 1-diphosphate site. Orotate-binding residues include Thr-128 and Arg-156.

The protein belongs to the purine/pyrimidine phosphoribosyltransferase family. PyrE subfamily. In terms of assembly, homodimer. The cofactor is Mg(2+).

It catalyses the reaction orotidine 5'-phosphate + diphosphate = orotate + 5-phospho-alpha-D-ribose 1-diphosphate. It participates in pyrimidine metabolism; UMP biosynthesis via de novo pathway; UMP from orotate: step 1/2. Functionally, catalyzes the transfer of a ribosyl phosphate group from 5-phosphoribose 1-diphosphate to orotate, leading to the formation of orotidine monophosphate (OMP). The sequence is that of Orotate phosphoribosyltransferase from Salmonella paratyphi A (strain ATCC 9150 / SARB42).